The sequence spans 352 residues: MSNSAVSSANSIKLTEYSHGAGCGCKISPKVLTTILASQLPVFTDPNLLVGNQSRDDAAVYKLNDEIGIISTTDFFMPIVDDPFTFGRIAATNAISDIYAMGGTPMMAIAILGWPVNKLPAEIAQQVVDGGRQACMEAGIMLAGGHSIDAPEPIFGLAVTGQIALTDLKQNDTAKAGDRLYLTKPIGIGILTTAQKQKKLKDEDSQIAVNAMCQLNSIGAKIAKIKGVNALTDVTGFGLAGHLLEVCQGAKLTAKLDLDSVPLLPRALDYLAQGCIPGGTHRNYDSYGEHLPALTDHQKAILCDPQTSGGLLVAVSSEAEAELVALLNAHQIEPICIGSLETPTSTANVVLC.

Cys-23 is a catalytic residue. ATP is bound by residues Lys-26 and 54-56; that span reads SRD. Asp-57 is a Mg(2+) binding site. ATP-binding positions include Asp-74, Asp-97, and 145–147; that span reads GHS. Asp-97 serves as a coordination point for Mg(2+). Mg(2+) is bound at residue Asp-233.

Belongs to the selenophosphate synthase 1 family. Class I subfamily. As to quaternary structure, homodimer. It depends on Mg(2+) as a cofactor.

The enzyme catalyses hydrogenselenide + ATP + H2O = selenophosphate + AMP + phosphate + 2 H(+). In terms of biological role, synthesizes selenophosphate from selenide and ATP. In Shewanella sp. (strain MR-4), this protein is Selenide, water dikinase.